The primary structure comprises 222 residues: Triosephosphate isomerase (222 aa).

Position 9–11 (asparagine 9–lysine 11) interacts with substrate. The active-site Electrophile is histidine 93. The active-site Proton acceptor is the glutamate 141. Residues isoleucine 146, glycine 181, and alanine 202–serine 203 contribute to the substrate site.

Belongs to the triosephosphate isomerase family. As to quaternary structure, homotetramer; dimer of dimers.

The protein localises to the cytoplasm. The enzyme catalyses D-glyceraldehyde 3-phosphate = dihydroxyacetone phosphate. It participates in carbohydrate biosynthesis; gluconeogenesis. Its pathway is carbohydrate degradation; glycolysis; D-glyceraldehyde 3-phosphate from glycerone phosphate: step 1/1. Involved in the gluconeogenesis. Catalyzes stereospecifically the conversion of dihydroxyacetone phosphate (DHAP) to D-glyceraldehyde-3-phosphate (G3P). The protein is Triosephosphate isomerase of Methanothermus fervidus (strain ATCC 43054 / DSM 2088 / JCM 10308 / V24 S).